We begin with the raw amino-acid sequence, 285 residues long: NADPH-dependent 7-cyano-7-deazaguanine reductase (285 aa).

91–93 (IES) is a binding site for substrate. Residue 93 to 94 (SK) coordinates NADPH. The Thioimide intermediate role is filled by cysteine 193. Aspartate 200 serves as the catalytic Proton donor. Substrate is bound at residue 232–233 (HE). 261-262 (RG) is a binding site for NADPH.

The protein belongs to the GTP cyclohydrolase I family. QueF type 2 subfamily. In terms of assembly, homodimer.

It localises to the cytoplasm. The catalysed reaction is 7-aminomethyl-7-carbaguanine + 2 NADP(+) = 7-cyano-7-deazaguanine + 2 NADPH + 3 H(+). It participates in tRNA modification; tRNA-queuosine biosynthesis. Catalyzes the NADPH-dependent reduction of 7-cyano-7-deazaguanine (preQ0) to 7-aminomethyl-7-deazaguanine (preQ1). The sequence is that of NADPH-dependent 7-cyano-7-deazaguanine reductase from Shewanella frigidimarina (strain NCIMB 400).